Here is a 465-residue protein sequence, read N- to C-terminus: Phosphatidylserine synthase 1 (465 aa).

The Cytoplasmic segment spans residues 1–35; it reads MATTFRSQTLSKDDVNYRMHFRMINEQQVEDITIQ. Residues 36–56 form a helical membrane-spanning segment; sequence FFYKPHTISLLTVTVLSLMYF. Over 57 to 70 the chain is Lumenal; sequence AFTRDDGDPDSNLR. The chain crosses the membrane as a helical span at residues 71–91; it reads VGLILLVSFFLVISVLAFPNG. The Cytoplasmic segment spans residues 92 to 102; that stretch reads PFTRPHPAIWR. A helical membrane pass occupies residues 103–123; sequence IVFGLSVLYFLFLVFIIFLNW. At 124–286 the chain is on the lumenal side; that stretch reads DQVKALMFWL…WLDPKSSLQR (163 aa). The chain crosses the membrane as a helical span at residues 287–307; sequence VMGVYLFMIIWQLTELNTFFL. Residues 308–309 are Cytoplasmic-facing; that stretch reads KH. A helical membrane pass occupies residues 310–330; sequence IFVFPACHALSWCRILFIGII. At 331-355 the chain is on the lumenal side; it reads TAPTVRQYYAYLTDTQCKRVGTQCW. Residues 356–376 traverse the membrane as a helical segment; it reads VFGAIAFLEALACIKFGQDLF. The Cytoplasmic portion of the chain corresponds to 377 to 380; sequence SKTQ. A helical membrane pass occupies residues 381-401; that stretch reads ILYVILWLVCLAFITFLCLYV. Over 402-465 the chain is Lumenal; it reads MVWYAENYGP…DSRTINGMEK (64 aa). The disordered stretch occupies residues 446 to 465; the sequence is CSTRKRRDSGDSRTINGMEK.

It belongs to the phosphatidyl serine synthase family.

The protein localises to the endoplasmic reticulum membrane. The catalysed reaction is a 1,2-diacyl-sn-glycero-3-phosphoethanolamine + L-serine = a 1,2-diacyl-sn-glycero-3-phospho-L-serine + ethanolamine. It carries out the reaction a 1,2-diacyl-sn-glycero-3-phosphocholine + L-serine = a 1,2-diacyl-sn-glycero-3-phospho-L-serine + choline. It participates in phospholipid metabolism; phosphatidylserine biosynthesis. Its function is as follows. Catalyzes a base-exchange reaction in which the polar head group of phosphatidylethanolamine (PE) or phosphatidylcholine (PC) is replaced by L-serine. Catalyzes mainly the conversion of phosphatidylcholine but also converts, in vitro and to a lesser extent, phosphatidylethanolamine. This is Phosphatidylserine synthase 1 (ptdss1) from Danio rerio (Zebrafish).